A 172-amino-acid chain; its full sequence is UPF0398 protein gbs0290 (172 aa).

It belongs to the UPF0398 family.

This Streptococcus agalactiae serotype III (strain NEM316) protein is UPF0398 protein gbs0290.